We begin with the raw amino-acid sequence, 472 residues long: Tryptophanase (472 aa).

Lys270 carries the post-translational modification N6-(pyridoxal phosphate)lysine.

This sequence belongs to the beta-eliminating lyase family. In terms of assembly, homotetramer. Requires pyridoxal 5'-phosphate as cofactor.

The catalysed reaction is L-tryptophan + H2O = indole + pyruvate + NH4(+). It participates in amino-acid degradation; L-tryptophan degradation via pyruvate pathway; indole and pyruvate from L-tryptophan: step 1/1. The protein is Tryptophanase of Haemophilus influenzae (strain 86-028NP).